The primary structure comprises 447 residues: Tektin-4 (447 aa).

3 coiled-coil regions span residues 114–143, 324–348, and 375–423; these read KSEL…RALD, KILS…DKEA, and FRLM…TNSL.

Belongs to the tektin family. As to quaternary structure, microtubule inner protein component of sperm flagellar doublet microtubules. Ubiquitinated, leading to its degradation. Deubiquitinated by USP16, promoting its stability.

The protein resides in the cytoplasm. It localises to the cytoskeleton. The protein localises to the cilium axoneme. It is found in the flagellum axoneme. Functionally, microtubule inner protein (MIP) part of the dynein-decorated doublet microtubules (DMTs) in cilia and flagellar axoneme. Forms filamentous polymers in the walls of ciliary and flagellar microtubules. Contributes to normal sperm motility. This Rattus norvegicus (Rat) protein is Tektin-4 (Tekt4).